Here is a 394-residue protein sequence, read N- to C-terminus: Immune-associated nucleotide-binding protein 12 (394 aa).

Residues 45 to 251 (KPARTLLLVG…YMADLSHEIR (207 aa)) form the AIG1-type G domain. The tract at residues 54–61 (GRSGNGKS) is G1. Residues 54–62 (GRSGNGKSA) and S75 contribute to the GTP site. Positions 81–85 (GVTTA) are G2. The segment at 103 to 106 (DTPG) is G3. Residues 173-176 (TNED) form a G4 region. The segment at 210–212 (RNR) is G5. GTP is bound at residue N211. The stretch at 289-387 (NQQLRQMMER…KQMATDLQKS (99 aa)) forms a coiled coil.

It belongs to the TRAFAC class TrmE-Era-EngA-EngB-Septin-like GTPase superfamily. AIG1/Toc34/Toc159-like paraseptin GTPase family. IAN subfamily.

This is Immune-associated nucleotide-binding protein 12 from Arabidopsis thaliana (Mouse-ear cress).